The primary structure comprises 261 residues: Cytochrome c oxidase subunit 3 (261 aa).

Residues 1–15 are Mitochondrial matrix-facing; that stretch reads MTKQMHAFHMVNPSP. A helical transmembrane segment spans residues 16 to 34; the sequence is WPLTGAASAFMLTSGLAMW. The Mitochondrial intermembrane segment spans residues 35–40; the sequence is FHKHSN. The chain crosses the membrane as a helical span at residues 41-66; it reads TLIFLSMILMLLTMYQWWRDITREGT. Topologically, residues 67–72 are mitochondrial matrix; the sequence is FQGHHT. Residues 73–105 traverse the membrane as a helical segment; it reads SLVQKSLRYGMILFIVSEVCFFFGFFWTFYHSS. The Mitochondrial intermembrane segment spans residues 106–128; the sequence is LSPSPDLGMMWPPKGVIPLDPFE. A helical transmembrane segment spans residues 129–152; that stretch reads IPLLNTAILLGSGVSVTWAHHSLM. Over 153 to 155 the chain is Mitochondrial matrix; the sequence is EKT. The chain crosses the membrane as a helical span at residues 156–183; it reads HKDMVISLSITIILGIYFTLLQGMEYFN. Topologically, residues 184–190 are mitochondrial intermembrane; the sequence is STFNISD. Residues 191 to 223 traverse the membrane as a helical segment; it reads NAYGSTFFVATGFHGGHVIIGTLFLTVCLLRQL. Residues 224 to 232 are Mitochondrial matrix-facing; sequence MFHFTSSHH. A helical membrane pass occupies residues 233 to 256; it reads FGFEAAAWYWHFVDVVWLFLFISI. Residues 257 to 261 lie on the Mitochondrial intermembrane side of the membrane; sequence YWWGS.

This sequence belongs to the cytochrome c oxidase subunit 3 family. Component of the cytochrome c oxidase (complex IV, CIV), a multisubunit enzyme composed of 14 subunits. The complex is composed of a catalytic core of 3 subunits MT-CO1, MT-CO2 and MT-CO3, encoded in the mitochondrial DNA, and 11 supernumerary subunits COX4I, COX5A, COX5B, COX6A, COX6B, COX6C, COX7A, COX7B, COX7C, COX8 and NDUFA4, which are encoded in the nuclear genome. The complex exists as a monomer or a dimer and forms supercomplexes (SCs) in the inner mitochondrial membrane with NADH-ubiquinone oxidoreductase (complex I, CI) and ubiquinol-cytochrome c oxidoreductase (cytochrome b-c1 complex, complex III, CIII), resulting in different assemblies (supercomplex SCI(1)III(2)IV(1) and megacomplex MCI(2)III(2)IV(2)).

The protein localises to the mitochondrion inner membrane. It catalyses the reaction 4 Fe(II)-[cytochrome c] + O2 + 8 H(+)(in) = 4 Fe(III)-[cytochrome c] + 2 H2O + 4 H(+)(out). In terms of biological role, component of the cytochrome c oxidase, the last enzyme in the mitochondrial electron transport chain which drives oxidative phosphorylation. The respiratory chain contains 3 multisubunit complexes succinate dehydrogenase (complex II, CII), ubiquinol-cytochrome c oxidoreductase (cytochrome b-c1 complex, complex III, CIII) and cytochrome c oxidase (complex IV, CIV), that cooperate to transfer electrons derived from NADH and succinate to molecular oxygen, creating an electrochemical gradient over the inner membrane that drives transmembrane transport and the ATP synthase. Cytochrome c oxidase is the component of the respiratory chain that catalyzes the reduction of oxygen to water. Electrons originating from reduced cytochrome c in the intermembrane space (IMS) are transferred via the dinuclear copper A center (CU(A)) of subunit 2 and heme A of subunit 1 to the active site in subunit 1, a binuclear center (BNC) formed by heme A3 and copper B (CU(B)). The BNC reduces molecular oxygen to 2 water molecules using 4 electrons from cytochrome c in the IMS and 4 protons from the mitochondrial matrix. The polypeptide is Cytochrome c oxidase subunit 3 (MT-CO3) (Myxine glutinosa (Atlantic hagfish)).